The chain runs to 27 residues: GFGSFLGKALKAGLKLGANLLGGAPQQ.

As to expression, expressed by the skin glands.

Its subcellular location is the secreted. Its function is as follows. Antimicrobial peptide. This chain is Caerulein precursor fragment R1, found in Xenopus ruwenzoriensis (Uganda clawed frog).